Here is an 84-residue protein sequence, read N- to C-terminus: MRKDIHPAYQQVLFHDTNADVYFLIGSTIQTKQTKEYQGQVYPYVTLDISSASHPFYTGEVRQASNEGRVASFNKRFARFNRKS.

This sequence belongs to the bacterial ribosomal protein bL31 family. Type B subfamily. As to quaternary structure, part of the 50S ribosomal subunit.

This Acinetobacter baumannii (strain AB307-0294) protein is Large ribosomal subunit protein bL31B.